We begin with the raw amino-acid sequence, 165 residues long: Neurotrophin-3 (165 aa).

The signal sequence occupies residues 1–3; sequence IQS. Residues 4–119 constitute a propeptide that is removed on maturation; sequence TSMDQGSLSE…VLNQTSRRKR (116 aa). Residue N112 is glycosylated (N-linked (GlcNAc...) asparagine).

The protein belongs to the NGF-beta family.

The protein resides in the secreted. In terms of biological role, seems to promote the survival of visceral and proprioceptive sensory neurons. This chain is Neurotrophin-3 (NTF3), found in Morelia spilota (Carpet python).